The chain runs to 166 residues: Small ribosomal subunit protein cS23z (166 aa).

Belongs to the chloroplast-specific ribosomal protein cS23 family. In terms of assembly, part of the 30S ribosomal subunit.

The protein resides in the plastid. The protein localises to the chloroplast. Its function is as follows. Component of the chloroplast ribosome (chloro-ribosome), a dedicated translation machinery responsible for the synthesis of chloroplast genome-encoded proteins, including proteins of the transcription and translation machinery and components of the photosynthetic apparatus. The polypeptide is Small ribosomal subunit protein cS23z (Arabidopsis thaliana (Mouse-ear cress)).